We begin with the raw amino-acid sequence, 73 residues long: Myosin-IB light chain (73 aa).

EF-hand domains follow at residues 3–38 (DEKT…GLPM) and 38–73 (MTEA…VDES). Ca(2+) is bound by residues aspartate 16, aspartate 18, aspartate 20, and glutamate 27.

Myosin I is a dimer of a heavy and a light chain. Inability to self-assemble into filaments. Interacts with myoB. Does not interact with myoC or myoD.

Its function is as follows. Functions as the light chain for myosin-B. Binds calcium with submicromolar affinity and may sense physiological calcium changes. The protein is Myosin-IB light chain (mlcB) of Dictyostelium discoideum (Social amoeba).